We begin with the raw amino-acid sequence, 230 residues long: Demethylmenaquinone methyltransferase (230 aa).

S-adenosyl-L-methionine-binding positions include threonine 62, aspartate 80, 100 to 101 (DA), and serine 117.

Belongs to the class I-like SAM-binding methyltransferase superfamily. MenG/UbiE family.

It carries out the reaction a 2-demethylmenaquinol + S-adenosyl-L-methionine = a menaquinol + S-adenosyl-L-homocysteine + H(+). It participates in quinol/quinone metabolism; menaquinone biosynthesis; menaquinol from 1,4-dihydroxy-2-naphthoate: step 2/2. Its function is as follows. Methyltransferase required for the conversion of demethylmenaquinol (DMKH2) to menaquinol (MKH2). The protein is Demethylmenaquinone methyltransferase of Mycobacterium sp. (strain JLS).